Here is a 248-residue protein sequence, read N- to C-terminus: 3-deoxy-manno-octulosonate cytidylyltransferase (248 aa).

The protein belongs to the KdsB family.

Its subcellular location is the cytoplasm. The enzyme catalyses 3-deoxy-alpha-D-manno-oct-2-ulosonate + CTP = CMP-3-deoxy-beta-D-manno-octulosonate + diphosphate. The protein operates within nucleotide-sugar biosynthesis; CMP-3-deoxy-D-manno-octulosonate biosynthesis; CMP-3-deoxy-D-manno-octulosonate from 3-deoxy-D-manno-octulosonate and CTP: step 1/1. It participates in bacterial outer membrane biogenesis; lipopolysaccharide biosynthesis. Functionally, activates KDO (a required 8-carbon sugar) for incorporation into bacterial lipopolysaccharide in Gram-negative bacteria. The polypeptide is 3-deoxy-manno-octulosonate cytidylyltransferase (Shigella dysenteriae serotype 1 (strain Sd197)).